Here is a 618-residue protein sequence, read N- to C-terminus: GMC oxidoreductase family protein Mala s 12 (618 aa).

The first 23 residues, M1–A23, serve as a signal peptide directing secretion. Positions 129 and 280 each coordinate FAD. The Proton donor role is filled by H556. H599 functions as the Proton acceptor in the catalytic mechanism.

The protein belongs to the GMC oxidoreductase family. Monomer. FAD is required as a cofactor.

Its subcellular location is the secreted. The chain is GMC oxidoreductase family protein Mala s 12 from Malassezia sympodialis (strain ATCC 42132) (Atopic eczema-associated yeast).